A 349-amino-acid chain; its full sequence is DNA-directed RNA polymerase subunit Rpo1N (349 aa).

Positions 306–349 (EDEGEEFAGEQATNLSESADDRMDRDRPSSHGAAPIDVPEVGDD) are disordered. Residues 324 to 334 (ADDRMDRDRPS) show a composition bias toward basic and acidic residues.

Belongs to the RNA polymerase beta' chain family. In terms of assembly, part of the RNA polymerase complex.

Its subcellular location is the cytoplasm. It catalyses the reaction RNA(n) + a ribonucleoside 5'-triphosphate = RNA(n+1) + diphosphate. Its function is as follows. DNA-dependent RNA polymerase (RNAP) catalyzes the transcription of DNA into RNA using the four ribonucleoside triphosphates as substrates. Forms the clamp head domain. The protein is DNA-directed RNA polymerase subunit Rpo1N of Halococcus morrhuae (Micrococcus morrhuae).